Consider the following 102-residue polypeptide: Colipase-like protein 2 (102 aa).

The signal sequence occupies residues 1 to 23 (MAFTQALVTVLALLAGTLPHRHS). Cystine bridges form between Cys-36/Cys-47, Cys-42/Cys-58, Cys-46/Cys-80, Cys-68/Cys-88, and Cys-82/Cys-99.

This sequence belongs to the colipase family.

The protein localises to the secreted. The chain is Colipase-like protein 2 (Clpsl2) from Mus musculus (Mouse).